The sequence spans 506 residues: Glutamate--tRNA ligase (506 aa).

The short motif at 23–33 (PSPTGTPHVGL) is the 'HIGH' region element. The 'KMSKS' region signature appears at 267-271 (KLSKR). Lysine 270 serves as a coordination point for ATP.

Belongs to the class-I aminoacyl-tRNA synthetase family. Glutamate--tRNA ligase type 1 subfamily. Monomer.

Its subcellular location is the cytoplasm. The enzyme catalyses tRNA(Glu) + L-glutamate + ATP = L-glutamyl-tRNA(Glu) + AMP + diphosphate. Its function is as follows. Catalyzes the attachment of glutamate to tRNA(Glu) in a two-step reaction: glutamate is first activated by ATP to form Glu-AMP and then transferred to the acceptor end of tRNA(Glu). The protein is Glutamate--tRNA ligase of Clavibacter sepedonicus (Clavibacter michiganensis subsp. sepedonicus).